Consider the following 480-residue polypeptide: ESX-1 secretion system ATPase EccB1 (480 aa).

The chain crosses the membrane as a helical span at residues 44–64; it reads IALGIVVAVLILAGAALLAYF. The disordered stretch occupies residues 461–480; sequence DTLPADPSPRKVPAGASGAP.

This sequence belongs to the EccB family. As to quaternary structure, part of the ESX-1 / type VII secretion system (T7SS), which is composed of cytosolic and membrane components. The ESX-1 membrane complex is composed of EccB1, EccCa1, EccCb1, EccD1 and EccE1.

It is found in the cell inner membrane. Its function is as follows. An ATPase. Part of the ESX-1 specialized secretion system, which delivers several virulence factors to host cells during infection, including the key virulence factors EsxA (ESAT-6) and EsxB (CFP-10). The chain is ESX-1 secretion system ATPase EccB1 from Mycobacterium tuberculosis (strain CDC 1551 / Oshkosh).